Reading from the N-terminus, the 364-residue chain is Chorismate synthase (364 aa).

The tract at residues 41–60 (MQHDLDRRRPGTSRYTTARR) is disordered. Positions 48 and 54 each coordinate NADP(+). FMN-binding positions include 125 to 127 (RSS), 238 to 239 (NA), Gly-278, 293 to 297 (KPTSS), and Arg-319.

It belongs to the chorismate synthase family. In terms of assembly, homotetramer. The cofactor is FMNH2.

It catalyses the reaction 5-O-(1-carboxyvinyl)-3-phosphoshikimate = chorismate + phosphate. It participates in metabolic intermediate biosynthesis; chorismate biosynthesis; chorismate from D-erythrose 4-phosphate and phosphoenolpyruvate: step 7/7. Its function is as follows. Catalyzes the anti-1,4-elimination of the C-3 phosphate and the C-6 proR hydrogen from 5-enolpyruvylshikimate-3-phosphate (EPSP) to yield chorismate, which is the branch point compound that serves as the starting substrate for the three terminal pathways of aromatic amino acid biosynthesis. This reaction introduces a second double bond into the aromatic ring system. The chain is Chorismate synthase from Shewanella baltica (strain OS185).